A 316-amino-acid chain; its full sequence is L-lactate dehydrogenase (316 aa).

Residues Val15, Asp36, Arg41, Tyr66, and 80–81 each bind NAD(+); that span reads GA. Substrate-binding positions include Gln83, Arg90, and 122-125; that span reads NPVD. NAD(+) is bound by residues 120–122 and Thr145; that span reads ATN. 150–153 lines the substrate pocket; the sequence is DTAR. Beta-D-fructose 1,6-bisphosphate is bound by residues Arg155 and His170. His177 functions as the Proton acceptor in the catalytic mechanism. The residue at position 222 (Tyr222) is a Phosphotyrosine. Thr231 is a binding site for substrate. Positions 287 to 316 are disordered; that stretch reads DPGLSDEEREALRDSARALRDSRADLTVGT. Over residues 296–310 the composition is skewed to basic and acidic residues; it reads EALRDSARALRDSRA.

This sequence belongs to the LDH/MDH superfamily. LDH family. In terms of assembly, homotetramer.

Its subcellular location is the cytoplasm. The enzyme catalyses (S)-lactate + NAD(+) = pyruvate + NADH + H(+). The protein operates within fermentation; pyruvate fermentation to lactate; (S)-lactate from pyruvate: step 1/1. Allosterically activated by fructose 1,6-bisphosphate (FBP). Functionally, catalyzes the conversion of lactate to pyruvate. The sequence is that of L-lactate dehydrogenase from Salinibacter ruber (strain DSM 13855 / M31).